The primary structure comprises 212 residues: External core antigen (212 aa).

The N-terminal stretch at 1–19 (MQLFHLCLVISCSCPTVQA) is a signal peptide. Residues 25 to 27 (GWL) form an HBEAG region. The disordered stretch occupies residues 165–212 (NAPILSTLPETTVVRRRGRSPRRRTPSPRRRRSQSPRRRRSQSRESQC). The segment covering 178-205 (VRRRGRSPRRRTPSPRRRRSQSPRRRRS) has biased composition (basic residues). The 1; half-length repeat unit spans residues 184 to 190 (SPRRRTP). Residues 184 to 206 (SPRRRTPSPRRRRSQSPRRRRSQ) are 3 X 8 AA repeats of S-P-R-R-R-R-S-Q. Residues 184–212 (SPRRRTPSPRRRRSQSPRRRRSQSRESQC) constitute a propeptide that is removed on maturation. A run of 2 repeats spans residues 191–198 (SPRRRRSQ) and 199–206 (SPRRRRSQ).

The protein belongs to the orthohepadnavirus precore antigen family. Homodimerizes. In terms of processing, phosphorylated. Post-translationally, cleaved by host furin.

The protein localises to the secreted. Its subcellular location is the host nucleus. In terms of biological role, may regulate immune response to the intracellular capsid in acting as a T-cell tolerogen, by having an immunoregulatory effect which prevents destruction of infected cells by cytotoxic T-cells. This immune regulation may predispose to chronicity during perinatal infections and prevent severe liver injury during adult infections. In Hepatitis B virus genotype B1 subtype adw (isolate Japan/pJDW233/1988) (HBV-B), this protein is External core antigen.